A 216-amino-acid chain; its full sequence is Adenylate kinase (216 aa).

Residue 10–15 participates in ATP binding; the sequence is GAGKGT. Positions 30-59 are NMP; sequence STGDMFRAAIKEGTPLGLQAKEYMDRGDLV. AMP contacts are provided by residues Thr31, Arg36, 57 to 59, 85 to 88, and Gln92; these read DLV and GFPR. Residues 126-163 are LID; the sequence is GRRICKNCGATYHLVFNPPAKSGVCDKCGGELYQRADD. An ATP-binding site is contributed by Arg127. Residues Cys130 and Cys133 each contribute to the Zn(2+) site. 136-137 provides a ligand contact to ATP; the sequence is TY. Positions 150 and 153 each coordinate Zn(2+). Arg160 and Arg171 together coordinate AMP. ATP is bound at residue Gln199.

It belongs to the adenylate kinase family. In terms of assembly, monomer.

It localises to the cytoplasm. It carries out the reaction AMP + ATP = 2 ADP. Its pathway is purine metabolism; AMP biosynthesis via salvage pathway; AMP from ADP: step 1/1. Catalyzes the reversible transfer of the terminal phosphate group between ATP and AMP. Plays an important role in cellular energy homeostasis and in adenine nucleotide metabolism. This Geobacillus sp. (strain WCH70) protein is Adenylate kinase.